Here is a 323-residue protein sequence, read N- to C-terminus: Olfactory receptor 52B2 (323 aa).

Over 1-27 (MSHTNVTIFHPAVFVLPGIPGLEAYHI) the chain is Extracellular. An N-linked (GlcNAc...) asparagine glycan is attached at Asn-5. The helical transmembrane segment at 28 to 48 (WLSIPLCLIYITAVLGNSILI) threads the bilayer. Residues 49–56 (VVIVMERN) are Cytoplasmic-facing. A helical transmembrane segment spans residues 57 to 77 (LHVPMYFFLSMLAVMDILLST). Over 78–101 (TTVPKALAIFWLQAHNIAFDACVT) the chain is Extracellular. An intrachain disulfide couples Cys-99 to Cys-191. A helical membrane pass occupies residues 102–122 (QGFFVHMMFVGESAILLAMAF). Residues 123 to 141 (DRFVAICAPLRYTTVLTWP) are Cytoplasmic-facing. A helical membrane pass occupies residues 142–162 (VVGRIALAVITRSFCIIFPVI). Topologically, residues 163-198 (FLLKRLPFCLTNIVPHSYCEHIGVARLACADITVNI) are extracellular. The helical transmembrane segment at 199-219 (WYGFSVPIVMVILDVILIAVS) threads the bilayer. The Cytoplasmic portion of the chain corresponds to 220–239 (YSLILRAVFRLPSQDARHKA). Residues 240-260 (LSTCGSHLCVILMFYVPSFFT) form a helical membrane-spanning segment. Residues 261-275 (LLTHHFGRNIPQHVH) lie on the Extracellular side of the membrane. Residues 276-296 (ILLANLYVAVPPMLNPIVYGV) traverse the membrane as a helical segment. Over 297–323 (KTKQIREGVAHRFFDIKTWCCTSPLGS) the chain is Cytoplasmic.

It belongs to the G-protein coupled receptor 1 family.

It localises to the cell membrane. Functionally, odorant receptor. This chain is Olfactory receptor 52B2 (OR52B2), found in Homo sapiens (Human).